Here is a 391-residue protein sequence, read N- to C-terminus: uncharacterized protein (391 aa).

This is an uncharacterized protein from Rickettsia prowazekii (strain Madrid E).